Here is a 196-residue protein sequence, read N- to C-terminus: Thymidine kinase (196 aa).

ATP-binding positions include 9 to 16 (GTMNSGKS) and 85 to 88 (DEAQ). Glu86 functions as the Proton acceptor in the catalytic mechanism. Residues Cys143, Cys146, Cys180, and His183 each coordinate Zn(2+).

The protein belongs to the thymidine kinase family. Homotetramer.

The protein localises to the cytoplasm. It catalyses the reaction thymidine + ATP = dTMP + ADP + H(+). The protein is Thymidine kinase of Streptococcus thermophilus (strain CNRZ 1066).